We begin with the raw amino-acid sequence, 139 residues long: Small ribosomal subunit protein uS12 (139 aa).

Residues 1–21 are disordered; that stretch reads MSTVSQLIKKRRSSKTSKTKA. Residues 8–18 are compositionally biased toward basic residues; that stretch reads IKKRRSSKTSK. Asp102 is subject to 3-methylthioaspartic acid.

This sequence belongs to the universal ribosomal protein uS12 family. In terms of assembly, part of the 30S ribosomal subunit. Contacts proteins S8 and S17. May interact with IF1 in the 30S initiation complex.

Its function is as follows. With S4 and S5 plays an important role in translational accuracy. Functionally, interacts with and stabilizes bases of the 16S rRNA that are involved in tRNA selection in the A site and with the mRNA backbone. Located at the interface of the 30S and 50S subunits, it traverses the body of the 30S subunit contacting proteins on the other side and probably holding the rRNA structure together. The combined cluster of proteins S8, S12 and S17 appears to hold together the shoulder and platform of the 30S subunit. The chain is Small ribosomal subunit protein uS12 from Aster yellows witches'-broom phytoplasma (strain AYWB).